The sequence spans 480 residues: tRNA-2-methylthio-N(6)-dimethylallyladenosine synthase (480 aa).

One can recognise an MTTase N-terminal domain in the interval 25–145; sequence GVFYVHTLGC…LPQLLDQARI (121 aa). Positions 34, 74, 108, 182, 186, and 189 each coordinate [4Fe-4S] cluster. A Radical SAM core domain is found at 168–397; that stretch reads RASKVSSWVA…VALQERITEE (230 aa). The region spanning 400–470 is the TRAM domain; the sequence is KTFEGRDVEV…RHNLIADPNP (71 aa).

The protein belongs to the methylthiotransferase family. MiaB subfamily. In terms of assembly, monomer. [4Fe-4S] cluster serves as cofactor.

The protein localises to the cytoplasm. The catalysed reaction is N(6)-dimethylallyladenosine(37) in tRNA + (sulfur carrier)-SH + AH2 + 2 S-adenosyl-L-methionine = 2-methylsulfanyl-N(6)-dimethylallyladenosine(37) in tRNA + (sulfur carrier)-H + 5'-deoxyadenosine + L-methionine + A + S-adenosyl-L-homocysteine + 2 H(+). Functionally, catalyzes the methylthiolation of N6-(dimethylallyl)adenosine (i(6)A), leading to the formation of 2-methylthio-N6-(dimethylallyl)adenosine (ms(2)i(6)A) at position 37 in tRNAs that read codons beginning with uridine. The sequence is that of tRNA-2-methylthio-N(6)-dimethylallyladenosine synthase from Bifidobacterium adolescentis (strain ATCC 15703 / DSM 20083 / NCTC 11814 / E194a).